The chain runs to 395 residues: Digeranylgeranylglycerophospholipid reductase (395 aa).

9 residues coordinate FAD: Ala-15, Asp-34, Cys-45, Ala-46, Ala-48, Arg-97, Ala-121, Asp-276, and Gly-288. Arg-329 is an a 2,3-bis-O-(geranylgeranyl)-sn-glycerol 1-phospholipid binding site.

The protein belongs to the geranylgeranyl reductase family. DGGGPL reductase subfamily. It depends on FAD as a cofactor.

The enzyme catalyses a 2,3-bis-O-phytanyl-sn-glycerol 1-phospholipid + 8 A = a 2,3-bis-O-(geranylgeranyl)-sn-glycerol 1-phospholipid + 8 AH2. The catalysed reaction is 2,3-bis-O-(phytanyl)-sn-glycerol 1-phosphate + 8 A = 2,3-bis-O-(geranylgeranyl)-sn-glycerol 1-phosphate + 8 AH2. It carries out the reaction CDP-2,3-bis-O-(geranylgeranyl)-sn-glycerol + 8 AH2 = CDP-2,3-bis-O-(phytanyl)-sn-glycerol + 8 A. It catalyses the reaction archaetidylserine + 8 AH2 = 2,3-bis-O-phytanyl-sn-glycero-3-phospho-L-serine + 8 A. The protein operates within membrane lipid metabolism; glycerophospholipid metabolism. Functionally, is involved in the reduction of 2,3-digeranylgeranylglycerophospholipids (unsaturated archaeols) into 2,3-diphytanylglycerophospholipids (saturated archaeols) in the biosynthesis of archaeal membrane lipids. Catalyzes the formation of archaetidic acid (2,3-di-O-phytanyl-sn-glyceryl phosphate) from 2,3-di-O-geranylgeranylglyceryl phosphate (DGGGP) via the hydrogenation of each double bond of the isoprenoid chains. Is also probably able to reduce double bonds of geranyl groups in CDP-2,3-bis-O-(geranylgeranyl)-sn-glycerol and archaetidylserine, thus acting at various stages in the biosynthesis of archaeal membrane lipids. This is Digeranylgeranylglycerophospholipid reductase from Thermococcus kodakarensis (strain ATCC BAA-918 / JCM 12380 / KOD1) (Pyrococcus kodakaraensis (strain KOD1)).